The primary structure comprises 89 residues: Cell division topological specificity factor (89 aa).

It belongs to the MinE family.

Its function is as follows. Prevents the cell division inhibition by proteins MinC and MinD at internal division sites while permitting inhibition at polar sites. This ensures cell division at the proper site by restricting the formation of a division septum at the midpoint of the long axis of the cell. This is Cell division topological specificity factor from Proteus mirabilis (strain HI4320).